The chain runs to 256 residues: uncharacterized protein (256 aa).

In terms of domain architecture, HTH deoR-type spans 7–62 (PAERQKTLLNLISKQSVISINNLVNILGVSHMTVRRDIQKLEEDGKVISVSGGVQL). The H-T-H motif DNA-binding region spans 24–43 (ISINNLVNILGVSHMTVRRD).

This is an uncharacterized protein from Haemophilus influenzae (strain ATCC 51907 / DSM 11121 / KW20 / Rd).